The chain runs to 60 residues: Antitoxin Dmd (60 aa).

In terms of assembly, can form a complex with non-cognate host toxins LsoA and RnlA.

Functionally, antitoxin component of a potential type II toxin-antitoxin (TA) system. Acts as an antitoxin against host toxins RnlA and LsoA, preventing them from degrading T4 bacteriophage-derived mRNA and thus permitting successful virus infection. Stabilizes middle (8-10 minutes) and late (18 to 28 minutes) T4 gene transcripts. The polypeptide is Antitoxin Dmd (dmd) (Escherichia coli (Bacteriophage T4)).